Here is a 656-residue protein sequence, read N- to C-terminus: Heparan-alpha-glucosaminide N-acetyltransferase (656 aa).

The disordered stretch occupies residues 1–31; sequence MTGGSSSRRRRAEERSSAAGTERNSRREAVG. At 1–185 the chain is on the lumenal, vesicle side; it reads MTGGSSSRRR…IIVNENPVDS (185 aa). Asn137 and Asn157 each carry an N-linked (GlcNAc...) asparagine glycan. Cys146 and Cys455 are oxidised to a cystine. Residues 186 to 206 traverse the membrane as a helical segment; it reads NLPVSIAFLVGLALIVAVSLL. Residues 207–268 lie on the Cytoplasmic side of the membrane; that stretch reads RLLLSLDDVN…NRLRCVDTFR (62 aa). The disordered stretch occupies residues 234–253; sequence SELGSPSRADPLSADYQPET. A phosphoserine mark is found at Ser238 and Ser240. Phosphotyrosine is present on Tyr249. The chain crosses the membrane as a helical span at residues 269-289; that stretch reads GLALVLMVFVNYGGGKYWYFK. His290 is an active-site residue. Topologically, residues 290 to 295 are lumenal, vesicle; it reads HSSWNG. The chain crosses the membrane as a helical span at residues 296 to 316; it reads LTVADLVFPWFVFIMGTSIFL. Residues 317–338 are Cytoplasmic-facing; it reads SMTSILQRGCSKLKLLGKIVWR. A helical membrane pass occupies residues 339–359; that stretch reads SFLLICIGVIIVNPNYCLGPL. At 360-367 the chain is on the lumenal, vesicle side; sequence SWDKVRIP. A helical membrane pass occupies residues 368–388; it reads GVLQRLGVTYFVVAVLEFFFW. Topologically, residues 389-413 are cytoplasmic; the sequence is KPVPDSCTLESSCFSLRDITSSWPQ. Residues 414 to 434 form a helical membrane-spanning segment; the sequence is WLTILTLESIWLALTFFLPVP. Over 435–493 the chain is Lumenal, vesicle; the sequence is GCPTGYLGPGGIGDLGKYPHCTGGAAGYIDRLLLGDNHLYQHPSSTVLYHTEVAYDPEG. The helical transmembrane segment at 494–514 threads the bilayer; it reads VLGTINSIVMAFLGVQAGKIL. Topologically, residues 515–522 are cytoplasmic; the sequence is VYYKDQTK. Residues 523 to 543 form a helical membrane-spanning segment; that stretch reads AILTRFAAWCCILGLISIVLT. Residues 544–557 lie on the Lumenal, vesicle side of the membrane; it reads KVSANEGFIPINKN. Residues 558-578 form a helical membrane-spanning segment; it reads LWSISYVTTLSCFAFFILLIL. Topologically, residues 579–585 are cytoplasmic; it reads YPVVDVK. Residues 586-606 form a helical membrane-spanning segment; it reads GLWTGTPFFYPGMNSILVYVG. Residues 607 to 627 are Lumenal, vesicle-facing; the sequence is HEVLENYFPFQWKLADEQSHK. A helical membrane pass occupies residues 628–648; sequence EHLIQNIVATALWVLIAYVLY. The segment at 641–656 is lysosomal targeting region; sequence VLIAYVLYKKKLFWKI. Topologically, residues 649–656 are cytoplasmic; that stretch reads KKKLFWKI.

In terms of assembly, homooligomer. Homooligomerization is necessary for enzyme activity. Post-translationally, undergoes intralysosomal proteolytic cleavage; occurs within the end of the first and/or the beginning of the second luminal domain and is essential for the activation of the enzyme. In terms of processing, glycosylated. In terms of tissue distribution, expressed in the retina.

It is found in the lysosome membrane. The enzyme catalyses alpha-D-glucosaminyl-[heparan sulfate](n) + acetyl-CoA = N-acetyl-alpha-D-glucosaminyl-[heparan sulfate](n) + CoA + H(+). Its function is as follows. Lysosomal acetyltransferase that acetylates the non-reducing terminal alpha-glucosamine residue of intralysosomal heparin or heparan sulfate, converting it into a substrate for luminal alpha-N-acetyl glucosaminidase. This chain is Heparan-alpha-glucosaminide N-acetyltransferase (Hgsnat), found in Mus musculus (Mouse).